The following is a 69-amino-acid chain: Neurotoxin Cex7 (69 aa).

A1 is a signal peptide. The region spanning 2–67 (REGYLVSKST…TYPIPGKSCG (66 aa)) is the LCN-type CS-alpha/beta domain. Intrachain disulfides connect C13/C66, C17/C42, C26/C47, and C30/C49. Cysteine amide is present on C66. Residues 67–69 (GKK) constitute a propeptide that is removed on maturation.

The protein belongs to the long (4 C-C) scorpion toxin superfamily. Sodium channel inhibitor family. Beta subfamily. In terms of tissue distribution, expressed by the venom gland.

The protein localises to the secreted. Its function is as follows. Beta toxins bind voltage-independently at site-4 of sodium channels (Nav) and shift the voltage of activation toward more negative potentials thereby affecting sodium channel activation and promoting spontaneous and repetitive firing. This is Neurotoxin Cex7 from Centruroides exilicauda (Bark scorpion).